The following is a 189-amino-acid chain: RPW8-like protein 1 (189 aa).

One can recognise an RPW8 domain in the interval 1 to 153 (MPLVELLTSA…ITRQPMDIIE (153 aa)). Residues 7 to 24 (LTSAALGLSLQLLHDAII) form a helical membrane-spanning segment. Coiled-coil stretches lie at residues 65–92 (FRKV…LKLR) and 126–147 (DIKK…ITRQ). N-linked (GlcNAc...) asparagine glycosylation occurs at Asn177.

The protein belongs to the plant RPW8 protein family.

Its subcellular location is the membrane. Probable disease resistance (R) protein. This is RPW8-like protein 1 from Arabidopsis thaliana (Mouse-ear cress).